The following is a 167-amino-acid chain: Homeobox protein EgHBX3 (167 aa).

The segment at residues 80–139 (SQSKRRVLFNKFQISQLEKRLKQRYLTAQERQELAHTIGLTPTQVKIWFQNHAYKMKRLF) is a DNA-binding region (homeobox).

It belongs to the NK-2 homeobox family.

The protein resides in the nucleus. This chain is Homeobox protein EgHBX3 (HBX3), found in Echinococcus granulosus (Hydatid tapeworm).